The primary structure comprises 585 residues: Protein DENND6B (585 aa).

Over residues 1–10 (MEVPVGPGPR) the composition is skewed to low complexity. Residues 1 to 25 (MEVPVGPGPRQAGGGLGATRSSSSG) form a disordered region. The region spanning 43 to 221 (ECVCVVTFDL…IQVRIPSRVD (179 aa)) is the uDENN domain. The cDENN domain maps to 246 to 373 (VHELDLFRCF…VKLKKPSRLK (128 aa)). Positions 375 to 499 (LDTKPGLYTS…KSPHFDGWYR (125 aa)) constitute a dDENN domain.

This sequence belongs to the DENND6 family.

It localises to the recycling endosome. The protein localises to the cytoplasm. Functionally, guanine nucleotide exchange factor (GEF) for RAB14. Also has some, lesser GEF activity towards RAB35. This chain is Protein DENND6B (Dennd6b), found in Mus musculus (Mouse).